A 534-amino-acid polypeptide reads, in one-letter code: Bifunctional pantoate ligase/cytidylate kinase (534 aa).

The interval 1 to 302 (MRLLTTVAAL…LGSTRLIDNT (302 aa)) is pantoate--beta-alanine ligase. An ATP-binding site is contributed by 48 to 55 (MGSLHQGH). H55 serves as the catalytic Proton donor. Q79 contributes to the (R)-pantoate binding site. Q79 is a binding site for beta-alanine. 172-175 (GQKD) serves as a coordination point for ATP. Q178 provides a ligand contact to (R)-pantoate. Residues V201 and 209–212 (CSSR) each bind ATP. The cytidylate kinase stretch occupies residues 303–534 (ILRDRQPIIA…DYYQQRLSQW (232 aa)).

It in the N-terminal section; belongs to the pantothenate synthetase family. This sequence in the C-terminal section; belongs to the cytidylate kinase family. Type 1 subfamily.

Its subcellular location is the cytoplasm. It carries out the reaction (R)-pantoate + beta-alanine + ATP = (R)-pantothenate + AMP + diphosphate + H(+). The catalysed reaction is CMP + ATP = CDP + ADP. The enzyme catalyses dCMP + ATP = dCDP + ADP. Its pathway is cofactor biosynthesis; (R)-pantothenate biosynthesis; (R)-pantothenate from (R)-pantoate and beta-alanine: step 1/1. Catalyzes the condensation of pantoate with beta-alanine in an ATP-dependent reaction via a pantoyl-adenylate intermediate. Its function is as follows. Catalyzes the transfer of a phosphate group from ATP to either CMP or dCMP to form CDP or dCDP and ADP, respectively. The chain is Bifunctional pantoate ligase/cytidylate kinase from Nostoc sp. (strain PCC 7120 / SAG 25.82 / UTEX 2576).